A 317-amino-acid chain; its full sequence is Small ribosomal subunit protein uS2 (317 aa).

S2 carries the N-acetylserine modification. Laminin-binding stretches follow at residues 161–180 (IPCN…MLAR) and 205–229 (RDPE…EFQG). [DE]-W-[ST] repeat units lie at residues 230–232 (EWS), 245–247 (DWS), 288–290 (DWS), 297–299 (DWS), and 315–317 (EWS). Residues 242 to 317 (EVPDWSEGVQ…DWGGSTAEWS (76 aa)) form a laminin-binding region. Residues 278-317 (PGPTTEGYSEDWSAQPATEDWSAAPTAQAGDWGGSTAEWS) are disordered.

This sequence belongs to the universal ribosomal protein uS2 family. As to quaternary structure, monomer (37LRP) and homodimer (67LR). Component of the small ribosomal subunit. Mature ribosomes consist of a small (40S) and a large (60S) subunit. The 40S subunit contains about 33 different proteins and 1 molecule of RNA (18S). The 60S subunit contains about 49 different proteins and 3 molecules of RNA (28S, 5.8S and 5S). Interacts with rps21. Interacts with several laminins including at least lamb1. Interacts with mdk. In terms of processing, acylated. Acylation may be a prerequisite for conversion of the monomeric 37 kDa laminin receptor precursor (37LRP) to the mature dimeric 67 kDa laminin receptor (67LR), and may provide a mechanism for membrane association. Post-translationally, cleaved by stromelysin-3 (ST3) at the cell surface. Cleavage by stromelysin-3 may be a mechanism to alter cell-extracellular matrix interactions.

The protein resides in the cell membrane. The protein localises to the cytoplasm. It localises to the nucleus. Functionally, required for the assembly and/or stability of the 40S ribosomal subunit. Required for the processing of the 20S rRNA-precursor to mature 18S rRNA in a late step of the maturation of 40S ribosomal subunits. Also functions as a cell surface receptor for laminin. Plays a role in cell adhesion to the basement membrane and in the consequent activation of signaling transduction pathways. May play a role in cell fate determination and tissue morphogenesis. The protein is Small ribosomal subunit protein uS2 (rpsa) of Ictalurus punctatus (Channel catfish).